The primary structure comprises 243 residues: Proteasome subunit beta (243 aa).

Over residues 1 to 16 (MRAPQHNSDFSRTVNQ) the composition is skewed to polar residues. The interval 1–29 (MRAPQHNSDFSRTVNQLADDPNPYEPEVG) is disordered. The propeptide at 1–48 (MRAPQHNSDFSRTVNQLADDPNPYEPEVGSMPKNEFSRADLDNVNKTG) is removed in mature form; by autocatalysis. T49 (nucleophile) is an active-site residue.

The protein belongs to the peptidase T1B family. As to quaternary structure, the 20S proteasome core is composed of 14 alpha and 14 beta subunits that assemble into four stacked heptameric rings, resulting in a barrel-shaped structure. The two inner rings, each composed of seven catalytic beta subunits, are sandwiched by two outer rings, each composed of seven alpha subunits. The catalytic chamber with the active sites is on the inside of the barrel. Has a gated structure, the ends of the cylinder being occluded by the N-termini of the alpha-subunits. Is capped at one or both ends by the proteasome regulatory ATPase, PAN.

It is found in the cytoplasm. It carries out the reaction Cleavage of peptide bonds with very broad specificity.. With respect to regulation, the formation of the proteasomal ATPase PAN-20S proteasome complex, via the docking of the C-termini of PAN into the intersubunit pockets in the alpha-rings, triggers opening of the gate for substrate entry. Interconversion between the open-gate and close-gate conformations leads to a dynamic regulation of the 20S proteasome proteolysis activity. Its function is as follows. Component of the proteasome core, a large protease complex with broad specificity involved in protein degradation. This is Proteasome subunit beta from Natrialba magadii (strain ATCC 43099 / DSM 3394 / CCM 3739 / CIP 104546 / IAM 13178 / JCM 8861 / NBRC 102185 / NCIMB 2190 / MS3) (Natronobacterium magadii).